Reading from the N-terminus, the 241-residue chain is MRKIVIAGNWKMFKTQAESQEFLKEFLPALEETPQEREVLLCVPFTDLAILSQSLHGSLVQLGAQNVHWAENGAYTGEISGPMLTEIGVRYVIVGHSERRQFFGETDETVNLRLQAAQKYGLTPILCVGETKQQRDSGETESLIVSQLDKDLINVDQTNLVIAYEPIWAIGTGDTCETTEANRVIGLIRSQLKNSDVPIQYGGSVKPNNIDEIMAQPEIDGVLVGGASLEAASFARIVNYL.

9–11 (NWK) lines the substrate pocket. H96 functions as the Electrophile in the catalytic mechanism. Residue E165 is the Proton acceptor of the active site. Substrate is bound by residues G171, S204, and 225 to 226 (GG).

This sequence belongs to the triosephosphate isomerase family. As to quaternary structure, homodimer.

The protein resides in the cytoplasm. It catalyses the reaction D-glyceraldehyde 3-phosphate = dihydroxyacetone phosphate. The protein operates within carbohydrate biosynthesis; gluconeogenesis. It functions in the pathway carbohydrate degradation; glycolysis; D-glyceraldehyde 3-phosphate from glycerone phosphate: step 1/1. Functionally, involved in the gluconeogenesis. Catalyzes stereospecifically the conversion of dihydroxyacetone phosphate (DHAP) to D-glyceraldehyde-3-phosphate (G3P). In Nostoc sp. (strain PCC 7120 / SAG 25.82 / UTEX 2576), this protein is Triosephosphate isomerase.